Consider the following 389-residue polypeptide: 23S rRNA (uracil(747)-C(5))-methyltransferase RlmC (389 aa).

Residues Cys-12, Cys-20, Cys-23, and Cys-99 each contribute to the [4Fe-4S] cluster site. S-adenosyl-L-methionine contacts are provided by Gln-224, Phe-253, Glu-274, and Asn-321. Residue Cys-348 is the Nucleophile of the active site.

It belongs to the class I-like SAM-binding methyltransferase superfamily. RNA M5U methyltransferase family. RlmC subfamily.

It catalyses the reaction uridine(747) in 23S rRNA + S-adenosyl-L-methionine = 5-methyluridine(747) in 23S rRNA + S-adenosyl-L-homocysteine + H(+). Catalyzes the formation of 5-methyl-uridine at position 747 (m5U747) in 23S rRNA. The polypeptide is 23S rRNA (uracil(747)-C(5))-methyltransferase RlmC (Shewanella putrefaciens (strain CN-32 / ATCC BAA-453)).